We begin with the raw amino-acid sequence, 63 residues long: UPF0337 protein SERP0494 (63 aa).

Residues 1-46 (MAEDKFEQAKGNIKETVGNATDNKELEKDGKGDKASGKAKEAVENV) are disordered. A compositionally biased stretch (basic and acidic residues) spans 22–46 (DNKELEKDGKGDKASGKAKEAVENV).

Belongs to the UPF0337 (CsbD) family.

This chain is UPF0337 protein SERP0494, found in Staphylococcus epidermidis (strain ATCC 35984 / DSM 28319 / BCRC 17069 / CCUG 31568 / BM 3577 / RP62A).